Consider the following 229-residue polypeptide: Large ribosomal subunit protein bL25 (229 aa).

Disordered regions lie at residues 1–21 and 187–229; these read MSDA…GASR and PSAL…KGDD. Acidic residues predominate over residues 196–207; that stretch reads SEEEEDGEEVDA.

The protein belongs to the bacterial ribosomal protein bL25 family. CTC subfamily. In terms of assembly, part of the 50S ribosomal subunit; part of the 5S rRNA/L5/L18/L25 subcomplex. Contacts the 5S rRNA. Binds to the 5S rRNA independently of L5 and L18.

This is one of the proteins that binds to the 5S RNA in the ribosome where it forms part of the central protuberance. The protein is Large ribosomal subunit protein bL25 of Erythrobacter litoralis (strain HTCC2594).